We begin with the raw amino-acid sequence, 440 residues long: C4-dicarboxylate transport protein (440 aa).

Helical transmembrane passes span 15-35, 46-66, 78-98, 146-166, 190-210, 224-244, 291-311, 332-352, and 354-374; these read VLVA…TGVA, LIKM…IAGM, YALL…LVVV, AFAN…GFAL, IINM…AFTI, LMAC…GGIC, VVGL…SIYL, ITLL…TGSG, and IVLA…LALI. The disordered stretch occupies residues 420-440; the sequence is GAPLVDTRPTDDLGVAEGPAR.

This sequence belongs to the dicarboxylate/amino acid:cation symporter (DAACS) (TC 2.A.23) family.

It is found in the cell inner membrane. Functionally, responsible for the transport of dicarboxylates such as succinate, fumarate, and malate from the periplasm across the membrane. This chain is C4-dicarboxylate transport protein, found in Pseudomonas putida (strain ATCC 700007 / DSM 6899 / JCM 31910 / BCRC 17059 / LMG 24140 / F1).